The chain runs to 63 residues: Large ribosomal subunit protein uL29 (63 aa).

This sequence belongs to the universal ribosomal protein uL29 family.

This chain is Large ribosomal subunit protein uL29, found in Shewanella halifaxensis (strain HAW-EB4).